A 248-amino-acid chain; its full sequence is NADP-dependent 3-hydroxy acid dehydrogenase YdfG (248 aa).

Residues 7 to 12, 32 to 33, 54 to 55, and N81 contribute to the NADP(+) site; these read GATAGF, RR, and DV. Residue S134 participates in substrate binding. Residues Y147, K151, and 177–185 each bind NADP(+); that span reads PGLVGGTEF. The active-site Proton acceptor is Y147.

It belongs to the short-chain dehydrogenases/reductases (SDR) family. As to quaternary structure, homotetramer.

It carries out the reaction 3-hydroxypropanoate + NADP(+) = 3-oxopropanoate + NADPH + H(+). It catalyses the reaction L-allo-threonine + NADP(+) = aminoacetone + CO2 + NADPH. NADP-dependent dehydrogenase with broad substrate specificity acting on 3-hydroxy acids. Catalyzes the NADP-dependent oxidation of L-allo-threonine to L-2-amino-3-keto-butyrate, which is spontaneously decarboxylated into aminoacetone. Also acts on D-threonine, L-serine, D-serine, D-3-hydroxyisobutyrate, L-3-hydroxyisobutyrate, D-glycerate and L-glycerate. Able to catalyze the reduction of the malonic semialdehyde to 3-hydroxypropionic acid. YdfG is apparently supplementing RutE, the presumed malonic semialdehyde reductase involved in pyrimidine degradation since both are able to detoxify malonic semialdehyde. This chain is NADP-dependent 3-hydroxy acid dehydrogenase YdfG, found in Escherichia coli O157:H7.